The chain runs to 1226 residues: Methionine synthase (1226 aa).

The region spanning 6–326 (RQQLEQQLKQ…EHIAAIAKAV (321 aa)) is the Hcy-binding domain. Zn(2+)-binding residues include cysteine 248, cysteine 311, and cysteine 312. The Pterin-binding domain occupies 357-618 (FVNVGERTNV…VPLKLREAVE (262 aa)). Residues 651–745 (SALEWRAWPV…FINAQKSGST (95 aa)) enclose the B12-binding N-terminal domain. Residues glutamate 695, 757–761 (GDVHD), histidine 760, serine 805, threonine 809, and alanine 861 each bind methylcob(III)alamin. The 136-residue stretch at 747–882 (NGKILLATVK…SDEQRPGFIE (136 aa)) folds into the B12-binding domain. In terms of domain architecture, AdoMet activation spans 898–1226 (KTPKSRPVTL…EKWLAPNLDA (329 aa)). S-adenosyl-L-methionine contacts are provided by residues aspartate 948, arginine 1136, and 1191-1192 (YF).

This sequence belongs to the vitamin-B12 dependent methionine synthase family. Requires methylcob(III)alamin as cofactor. Zn(2+) is required as a cofactor.

It carries out the reaction (6S)-5-methyl-5,6,7,8-tetrahydrofolate + L-homocysteine = (6S)-5,6,7,8-tetrahydrofolate + L-methionine. It participates in amino-acid biosynthesis; L-methionine biosynthesis via de novo pathway; L-methionine from L-homocysteine (MetH route): step 1/1. Catalyzes the transfer of a methyl group from methyl-cobalamin to homocysteine, yielding enzyme-bound cob(I)alamin and methionine. Subsequently, remethylates the cofactor using methyltetrahydrofolate. This chain is Methionine synthase (metH), found in Vibrio cholerae serotype O1 (strain ATCC 39315 / El Tor Inaba N16961).